We begin with the raw amino-acid sequence, 528 residues long: Protein DA1-related 2 (528 aa).

The tract at residues 60–108 (SNGGGSGAHTNHHPPQFQEDENMVFPLPPSSLDDRSRGARDKEELDRSI) is disordered. A compositionally biased stretch (basic and acidic residues) spans 91-106 (LDDRSRGARDKEELDR). The UIM 1 domain maps to 99–118 (RDKEELDRSISLSLADNTKR). The 22-residue stretch at 127 to 148 (DNNRDFPRPFHGGLNPSSFIPP) folds into the UIM 2; degenerate domain. Positions 160–220 (RICGGCNSDI…KLCFKELTHP (61 aa)) constitute an LIM zinc-binding domain. A disordered region spans residues 447-474 (DPSTRNLPSTSSVATSSSSSFSNKKGGK). Over residues 455–470 (STSSVATSSSSSFSNK) the composition is skewed to low complexity.

In terms of assembly, interacts with ubiquitin, TCP14 and TCP15. Post-translationally, polyubiquitinated by DA2. Expressed in the vasculature of leaves, inflorescence stems, flowers, hypocotyls, and primary and lateral roots. In roots, expressed in phloem companion cells.

In terms of biological role, acts redundantly with DA1 and DAR1 to regulate endoreduplication during leaf development. Together with DA1 and DAR1, modulates the protein stability of the transcription factors TCP14 and TCP15, which repress endoreduplication by directly regulating the expression of cell-cycle genes. Involved in root phloem development. Is an essential component of early phloem development, long-distance delivery of phloem content, and proper maintenance of root system architecture. Involved in the control of root meristem size. Functions genetically downstream of cytokinin and IAA3 to maintain normal auxin distribution by influencing polar auxin transport. Acts through the PLETHORA pathway, upstream of PLT1 and PLT2 to influence root stem cell niche activity and thus control root meristem size. The protein is Protein DA1-related 2 of Arabidopsis thaliana (Mouse-ear cress).